Consider the following 795-residue polypeptide: Phenylalanine--tRNA ligase beta subunit (795 aa).

The 110-residue stretch at 39 to 148 (AGSFHGVVVG…ADAPIGTDIR (110 aa)) folds into the tRNA-binding domain. One can recognise a B5 domain in the interval 401–476 (PKRATITLRR…RVYGYNNIPD (76 aa)). Residues Asp-454, Asp-460, Glu-463, and Glu-464 each contribute to the Mg(2+) site. Positions 701-794 (SRFPANRRDI…LKERFQASLR (94 aa)) constitute an FDX-ACB domain.

This sequence belongs to the phenylalanyl-tRNA synthetase beta subunit family. Type 1 subfamily. In terms of assembly, tetramer of two alpha and two beta subunits. Mg(2+) serves as cofactor.

The protein resides in the cytoplasm. The enzyme catalyses tRNA(Phe) + L-phenylalanine + ATP = L-phenylalanyl-tRNA(Phe) + AMP + diphosphate + H(+). This Shigella boydii serotype 4 (strain Sb227) protein is Phenylalanine--tRNA ligase beta subunit.